A 130-amino-acid chain; its full sequence is Small ribosomal subunit protein uS9 (130 aa).

This sequence belongs to the universal ribosomal protein uS9 family.

This is Small ribosomal subunit protein uS9 from Azotobacter vinelandii (strain DJ / ATCC BAA-1303).